The chain runs to 1119 residues: Putative transcription factor SEF1 (1119 aa).

Disordered stretches follow at residues 1-70 (MGDP…TQSR) and 86-105 (QNGEDSSNISNNSNAVSKGK). Positions 47–70 (LHTQQSYYGNGTDGASESALTQSR) are enriched in polar residues. The segment at residues 118–148 (CTHCRQHKIKCNASEKFPAPCSRCERMGLHC) is a DNA-binding region (zn(2)-C6 fungal-type). Disordered regions lie at residues 236-290 (QLLQ…PANT), 306-335 (SQQISSSSPQNSSPTTTGHSPANDLSSSKQ), 894-913 (ASSSSTATRLNADNPTTDTN), 926-962 (KKSSKSSDTPTNKPKFNSTSSIPTATPTSEQRAAHNT), and 994-1018 (SADSNGTSNNNIPNSTAPLNTPDTN). The span at 243–260 (TTTTNPTTSSNSKVVTPT) shows a compositional bias: low complexity. A compositionally biased stretch (polar residues) spans 261–288 (GSDHSPASHNGGSLSSGKPQLLNDSVPA). The span at 306-322 (SQQISSSSPQNSSPTTT) shows a compositional bias: low complexity. Composition is skewed to polar residues over residues 323–335 (GHSPANDLSSSKQ), 902–913 (RLNADNPTTDTN), and 931–942 (SSDTPTNKPKFN). Over residues 943–954 (STSSIPTATPTS) the composition is skewed to low complexity.

It is found in the nucleus. In terms of biological role, putative transcription factor. Suppresses the lethal phenotype of RPM2 deletion. The protein is Putative transcription factor SEF1 (SEF1) of Kluyveromyces lactis (strain ATCC 8585 / CBS 2359 / DSM 70799 / NBRC 1267 / NRRL Y-1140 / WM37) (Yeast).